Here is a 486-residue protein sequence, read N- to C-terminus: Serralysin (486 aa).

His187 provides a ligand contact to Zn(2+). Glu188 is an active-site residue. The Zn(2+) site is built by His191 and His197. The Ca(2+) site is built by Arg266, Asp269, Asp298, Gly300, Gly301, Asp303, Thr340, and Glu342. Hemolysin-type calcium-binding repeat units lie at residues 345–362 and 363–380; these read IGGS…ANTL and KGGA…ADNL.

This sequence belongs to the peptidase M10B family. The cofactor is Zn(2+). Requires Ca(2+) as cofactor.

The protein localises to the secreted. The catalysed reaction is Preferential cleavage of bonds with hydrophobic residues in P1'.. The chain is Serralysin (prtA1) from Photorhabdus luminescens (Xenorhabdus luminescens).